We begin with the raw amino-acid sequence, 152 residues long: 3-hydroxyacyl-[acyl-carrier-protein] dehydratase FabZ (152 aa).

Residue His-57 is part of the active site.

The protein belongs to the thioester dehydratase family. FabZ subfamily.

The protein resides in the cytoplasm. It carries out the reaction a (3R)-hydroxyacyl-[ACP] = a (2E)-enoyl-[ACP] + H2O. Involved in unsaturated fatty acids biosynthesis. Catalyzes the dehydration of short chain beta-hydroxyacyl-ACPs and long chain saturated and unsaturated beta-hydroxyacyl-ACPs. The protein is 3-hydroxyacyl-[acyl-carrier-protein] dehydratase FabZ of Bradyrhizobium sp. (strain BTAi1 / ATCC BAA-1182).